A 222-amino-acid chain; its full sequence is Adenylate kinase (222 aa).

S2 is a propeptide (removed in mature form). N-acetylserine occurs at positions 2 and 3. An ATP-binding site is contributed by 16–21; that stretch reads GAGKGT. Residues 36-65 are NMP; that stretch reads ATGDMLRSQIAKGTQLGLEAKKIMDQGGLV. Residues T37, R42, 63 to 65, 92 to 95, and Q99 each bind AMP; these read GLV and GFPR. The interval 133-170 is LID; it reads GRLIHPASGRSYHKIFNPPKEDMKDDVTGEALVQRSDD. ATP contacts are provided by residues R134 and 143–144; that span reads SY. AMP-binding residues include R167 and R178. Q206 is an ATP binding site.

Belongs to the adenylate kinase family. AK2 subfamily. Monomer.

Its subcellular location is the cytoplasm. It localises to the cytosol. The protein resides in the mitochondrion intermembrane space. It carries out the reaction AMP + ATP = 2 ADP. In terms of biological role, catalyzes the reversible transfer of the terminal phosphate group between ATP and AMP. Plays an important role in cellular energy homeostasis and in adenine nucleotide metabolism. Adenylate kinase activity is critical for regulation of the phosphate utilization and the AMP de novo biosynthesis pathways. The sequence is that of Adenylate kinase from Saccharomyces cerevisiae (strain RM11-1a) (Baker's yeast).